A 647-amino-acid polypeptide reads, in one-letter code: Protein cueball (647 aa).

A signal peptide spans 1-22 (MLWCPSVLVPLIAVAACLPVLA). The Extracellular segment spans residues 23–534 (IGTPLEWEFA…CMTPSPWTSN (512 aa)). N-linked (GlcNAc...) asparagine glycosylation is found at Asn-80 and Asn-106. LDL-receptor class B repeat units follow at residues 119–166 (RNLF…DVCR), 167–211 (RKLY…DQLS), and 212–257 (DRIF…TNDA). Residue Asn-175 is glycosylated (N-linked (GlcNAc...) asparagine). A glycan (N-linked (GlcNAc...) asparagine) is linked at Asn-316. EGF-like domains are found at residues 365-401 (DEKTAQLERDHCLNGGTYIADRVLCICPTGFKGSRCE) and 436-473 (EISKCSGLCLNGGHCKLEDISEKPSCECPHNFAGERCE). 5 disulfides stabilise this stretch: Cys-376–Cys-389, Cys-391–Cys-400, Cys-440–Cys-450, Cys-444–Cys-461, and Cys-463–Cys-472. A glycan (N-linked (GlcNAc...) asparagine) is linked at Asn-475. The helical transmembrane segment at 535–555 (VIIVLVLGIVSCFFLVAVIVH) threads the bilayer. At 556-647 (GFRRLYKPKR…LIHNMDDDLY (92 aa)) the chain is on the cytoplasmic side.

The protein belongs to the cueball family.

The protein resides in the cell membrane. In terms of biological role, has a role in spermatogenesis and oogenesis. This is Protein cueball from Drosophila persimilis (Fruit fly).